We begin with the raw amino-acid sequence, 208 residues long: Transmembrane protein 222 (208 aa).

A disordered region spans residues 1–26; it reads MAEAEGSSLLLLPPPPPPPRMAEVEA. Residues 1-55 lie on the Extracellular side of the membrane; it reads MAEAEGSSLLLLPPPPPPPRMAEVEAPTAAETDMKQYQGSGGVAMDVERSRFPYC. The helical transmembrane segment at 56–76 threads the bilayer; sequence VVWTPIPVLTWFFPIIGHMGI. Residues 77 to 164 are Cytoplasmic-facing; the sequence is CTSTGVIRDF…MRYNNSTNWN (88 aa). A helical transmembrane segment spans residues 165–185; the sequence is MVTLCFFCLLYGKYVSVGAFV. Lysine 186 is a topological domain (extracellular). Residues 187 to 207 form a helical membrane-spanning segment; it reads TWLPFILLLGIILTVSLVFNL. Residue arginine 208 is a topological domain, cytoplasmic.

As to expression, widely expressed. The highest expression is observed in the brain.

The protein localises to the membrane. The protein resides in the cell projection. Its subcellular location is the dendrite. This chain is Transmembrane protein 222 (TMEM222), found in Homo sapiens (Human).